The sequence spans 197 residues: Phosphoheptose isomerase (197 aa).

The region spanning 34 to 196 is the SIS domain; it reads MVHCLLSGNK…DHTLFPQDEQ (163 aa). Position 49 to 51 (49 to 51) interacts with substrate; it reads NGG. Zn(2+)-binding residues include H58 and E62. Substrate contacts are provided by residues E62, 91 to 92, 117 to 119, S122, and Q172; these read ND and STS. Positions 172 and 180 each coordinate Zn(2+).

It belongs to the SIS family. GmhA subfamily. Homotetramer. Requires Zn(2+) as cofactor.

The protein localises to the cytoplasm. The catalysed reaction is 2 D-sedoheptulose 7-phosphate = D-glycero-alpha-D-manno-heptose 7-phosphate + D-glycero-beta-D-manno-heptose 7-phosphate. Its pathway is carbohydrate biosynthesis; D-glycero-D-manno-heptose 7-phosphate biosynthesis; D-glycero-alpha-D-manno-heptose 7-phosphate and D-glycero-beta-D-manno-heptose 7-phosphate from sedoheptulose 7-phosphate: step 1/1. Functionally, catalyzes the isomerization of sedoheptulose 7-phosphate in D-glycero-D-manno-heptose 7-phosphate. The chain is Phosphoheptose isomerase from Shewanella halifaxensis (strain HAW-EB4).